A 312-amino-acid chain; its full sequence is Pantothenate kinase (312 aa).

97-104 (GSVAVGKS) provides a ligand contact to ATP.

Belongs to the prokaryotic pantothenate kinase family.

Its subcellular location is the cytoplasm. It carries out the reaction (R)-pantothenate + ATP = (R)-4'-phosphopantothenate + ADP + H(+). Its pathway is cofactor biosynthesis; coenzyme A biosynthesis; CoA from (R)-pantothenate: step 1/5. The chain is Pantothenate kinase (coaA) from Mycobacterium leprae (strain TN).